The sequence spans 379 residues: UDP-N-acetylglucosamine--N-acetylmuramyl-(pentapeptide) pyrophosphoryl-undecaprenol N-acetylglucosamine transferase (379 aa).

UDP-N-acetyl-alpha-D-glucosamine is bound by residues 17–19 (TGG), Asn128, Arg169, Ser197, and Gln298.

Belongs to the glycosyltransferase 28 family. MurG subfamily.

The protein resides in the cell inner membrane. The enzyme catalyses di-trans,octa-cis-undecaprenyl diphospho-N-acetyl-alpha-D-muramoyl-L-alanyl-D-glutamyl-meso-2,6-diaminopimeloyl-D-alanyl-D-alanine + UDP-N-acetyl-alpha-D-glucosamine = di-trans,octa-cis-undecaprenyl diphospho-[N-acetyl-alpha-D-glucosaminyl-(1-&gt;4)]-N-acetyl-alpha-D-muramoyl-L-alanyl-D-glutamyl-meso-2,6-diaminopimeloyl-D-alanyl-D-alanine + UDP + H(+). Its pathway is cell wall biogenesis; peptidoglycan biosynthesis. In terms of biological role, cell wall formation. Catalyzes the transfer of a GlcNAc subunit on undecaprenyl-pyrophosphoryl-MurNAc-pentapeptide (lipid intermediate I) to form undecaprenyl-pyrophosphoryl-MurNAc-(pentapeptide)GlcNAc (lipid intermediate II). The sequence is that of UDP-N-acetylglucosamine--N-acetylmuramyl-(pentapeptide) pyrophosphoryl-undecaprenol N-acetylglucosamine transferase from Brucella suis biovar 1 (strain 1330).